The sequence spans 217 residues: DNA transformation protein TfoX (217 aa).

It belongs to the Sxy/TfoX family.

In terms of biological role, required for DNA transformation. Positively regulates genes required for DNA transformation (late competence-specific genes) in association with CRP. Required for expression of the late competence-specific gene, com101A. Required for expression of the dprABC operon. This is DNA transformation protein TfoX from Haemophilus influenzae (strain ATCC 51907 / DSM 11121 / KW20 / Rd).